Here is a 308-residue protein sequence, read N- to C-terminus: Transcriptional adapter 1-1 (308 aa).

This sequence belongs to the TADA1 family. In terms of assembly, component of the Spt-Ada-Gcn5 acetyltransferase (SAGA) complex consisting of wda/Taf5L, Saf6, Taf9, Taf10b, Taf12, Ada1, Spt3, Spt7, Spt20, Sf3b3, Sf3b5, Nipped-A/Tra1, a histone acetyltransferase (HAT) module made up of Gcn5, Ada2b (Isoform B), Ada3 and Sgf29, and a deubiquitinase (DUB) module made up of not/nonstop, Sgf11 and e(y)2 tethered to SAGA by Atxn7. Not a component of the Ada2a-containing ATAC complex.

The protein localises to the nucleus. Functionally, component of the transcription regulatory complex SAGA, a multiprotein complex that activates transcription by remodeling chromatin and mediating histone acetylation and deubiquitination. The SAGA complex predominantly acetylates histone H3. This is Transcriptional adapter 1-1 from Drosophila melanogaster (Fruit fly).